A 518-amino-acid polypeptide reads, in one-letter code: Protein translocase subunit SecD (518 aa).

6 helical membrane-spanning segments follow: residues 9 to 29 (IVLS…NFIQ), 356 to 376 (GKKA…LSYG), 377 to 397 (VIGL…LALL), 406 to 426 (LPGI…NVLI), 463 to 483 (LIVA…FAVA), and 486 to 506 (IGII…IDVW).

It belongs to the SecD/SecF family. SecD subfamily. In terms of assembly, forms a complex with SecF. Part of the essential Sec protein translocation apparatus which comprises SecA, SecYEG and auxiliary proteins SecDF-YajC and YidC.

It localises to the cell inner membrane. In terms of biological role, part of the Sec protein translocase complex. Interacts with the SecYEG preprotein conducting channel. SecDF uses the proton motive force (PMF) to complete protein translocation after the ATP-dependent function of SecA. The protein is Protein translocase subunit SecD of Rickettsia prowazekii (strain Madrid E).